An 869-amino-acid chain; its full sequence is Bifunctional uridylyltransferase/uridylyl-removing enzyme (869 aa).

The segment at 1-332 (MTATPADRPD…QFDGEAVPVQ (332 aa)) is uridylyltransferase. Residues 333 to 691 (LDAGFSLRRG…RRAVPDNDAL (359 aa)) form a uridylyl-removing region. In terms of domain architecture, HD spans 450-572 (VDQHTLMVLR…VGTRERLDYL (123 aa)). 2 ACT domains span residues 692 to 771 (EVFV…PSRR) and 798 to 869 (RISL…LDPT).

It belongs to the GlnD family. The cofactor is Mg(2+).

It catalyses the reaction [protein-PII]-L-tyrosine + UTP = [protein-PII]-uridylyl-L-tyrosine + diphosphate. It carries out the reaction [protein-PII]-uridylyl-L-tyrosine + H2O = [protein-PII]-L-tyrosine + UMP + H(+). Its activity is regulated as follows. Uridylyltransferase (UTase) activity is inhibited by glutamine, while glutamine activates uridylyl-removing (UR) activity. Functionally, modifies, by uridylylation and deuridylylation, the PII regulatory proteins (GlnB and homologs), in response to the nitrogen status of the cell that GlnD senses through the glutamine level. Under low glutamine levels, catalyzes the conversion of the PII proteins and UTP to PII-UMP and PPi, while under higher glutamine levels, GlnD hydrolyzes PII-UMP to PII and UMP (deuridylylation). Thus, controls uridylylation state and activity of the PII proteins, and plays an important role in the regulation of nitrogen assimilation and metabolism. The chain is Bifunctional uridylyltransferase/uridylyl-removing enzyme from Xanthomonas campestris pv. campestris (strain B100).